The sequence spans 921 residues: Inter-alpha-trypsin inhibitor heavy chain H4 (921 aa).

Positions M1–A27 are cleaved as a signal peptide. Residues H28–E146 enclose the VIT domain. 3 N-linked (GlcNAc...) asparagine glycosylation sites follow: N80, N205, and N242. In terms of domain architecture, VWFA spans P270–E428. N-linked (GlcNAc...) asparagine glycans are attached at residues N513 and N577. The interval K591–R646 is disordered. Residues G608 to F623 are compositionally biased toward polar residues. O-linked (GalNAc...) threonine glycosylation is present at T712. C738 and C916 form a disulfide bridge.

This sequence belongs to the ITIH family. As to quaternary structure, interacts (via C-terminus) with DNAJC1 (via SANT 2 domain). Post-translationally, appears to be both N- and O-glycosylated. Cleaved by plasma kallikrein to yield 55- and 25-kDa fragments. As to expression, liver specific.

The protein resides in the secreted. Functionally, type II acute-phase protein (APP) involved in inflammatory responses to trauma. May also play a role in liver development or regeneration. The polypeptide is Inter-alpha-trypsin inhibitor heavy chain H4 (ITIH4) (Sus scrofa (Pig)).